A 123-amino-acid polypeptide reads, in one-letter code: Ribosome-binding factor A (123 aa).

The protein belongs to the RbfA family. Monomer. Binds 30S ribosomal subunits, but not 50S ribosomal subunits or 70S ribosomes.

Its subcellular location is the cytoplasm. Functionally, one of several proteins that assist in the late maturation steps of the functional core of the 30S ribosomal subunit. Associates with free 30S ribosomal subunits (but not with 30S subunits that are part of 70S ribosomes or polysomes). Required for efficient processing of 16S rRNA. May interact with the 5'-terminal helix region of 16S rRNA. This Magnetococcus marinus (strain ATCC BAA-1437 / JCM 17883 / MC-1) protein is Ribosome-binding factor A.